Here is a 275-residue protein sequence, read N- to C-terminus: MKGLTRLLNSLSRHTASVTCSPSSSSLLISRRSLFISAATHFPVNFSESITTNASRNCSRSSSFPFNWIEQRRTMFIQTQSTPNPSSLMFSPGKPVMEIGSADFPNSRSAMSSPLAKAIFAIDGVVRVFYGSDFVTVTKSDDVTWDILKPDIFAVVMDFYSSGQPLFLDSQATAAKDTAIHEDDSETVAMIKELLETRIRPSVQDDGGDIEYCGFDTETGIVKLRMQGACSGCPSSSVTLKSGIENMLMHYVSEVKGVEQEFDGEEEGTSSGPME.

The N-terminal 61 residues, 1–61 (MKGLTRLLNS…TNASRNCSRS (61 aa)), are a transit peptide targeting the mitochondrion.

Belongs to the NifU family.

It localises to the mitochondrion. Its function is as follows. Molecular scaffold for [Fe-S] cluster assembly of mitochondrial iron-sulfur proteins. The sequence is that of NifU-like protein 5, mitochondrial (NIFU5) from Arabidopsis thaliana (Mouse-ear cress).